Consider the following 260-residue polypeptide: Type III pantothenate kinase (260 aa).

An ATP-binding site is contributed by 6-13 (DAGNTRTK). Substrate is bound by residues tyrosine 88 and 95–98 (GVDR). Aspartate 97 (proton acceptor) is an active-site residue. Position 121 (serine 121) interacts with ATP. Threonine 184 is a binding site for substrate.

The protein belongs to the type III pantothenate kinase family. Homodimer. NH4(+) serves as cofactor. The cofactor is K(+).

The protein localises to the cytoplasm. It carries out the reaction (R)-pantothenate + ATP = (R)-4'-phosphopantothenate + ADP + H(+). Its pathway is cofactor biosynthesis; coenzyme A biosynthesis; CoA from (R)-pantothenate: step 1/5. In terms of biological role, catalyzes the phosphorylation of pantothenate (Pan), the first step in CoA biosynthesis. This Saccharophagus degradans (strain 2-40 / ATCC 43961 / DSM 17024) protein is Type III pantothenate kinase.